Consider the following 158-residue polypeptide: NAD(P)H-quinone oxidoreductase subunit J, chloroplastic (158 aa).

This sequence belongs to the complex I 30 kDa subunit family. NDH is composed of at least 16 different subunits, 5 of which are encoded in the nucleus.

It localises to the plastid. The protein resides in the chloroplast thylakoid membrane. It catalyses the reaction a plastoquinone + NADH + (n+1) H(+)(in) = a plastoquinol + NAD(+) + n H(+)(out). The enzyme catalyses a plastoquinone + NADPH + (n+1) H(+)(in) = a plastoquinol + NADP(+) + n H(+)(out). In terms of biological role, NDH shuttles electrons from NAD(P)H:plastoquinone, via FMN and iron-sulfur (Fe-S) centers, to quinones in the photosynthetic chain and possibly in a chloroplast respiratory chain. The immediate electron acceptor for the enzyme in this species is believed to be plastoquinone. Couples the redox reaction to proton translocation, and thus conserves the redox energy in a proton gradient. The sequence is that of NAD(P)H-quinone oxidoreductase subunit J, chloroplastic from Olimarabidopsis pumila (Dwarf rocket).